The primary structure comprises 353 residues: DNA integrity scanning protein DisA (353 aa).

A DAC domain is found at 6 to 144; it reads DKELMNILKI…GGIKYVLRDS (139 aa). ATP-binding positions include glycine 73, leucine 91, and 104-108; that span reads TRHRT.

This sequence belongs to the DisA family. As to quaternary structure, homooctamer. The cofactor is Mg(2+).

The catalysed reaction is 2 ATP = 3',3'-c-di-AMP + 2 diphosphate. Participates in a DNA-damage check-point that is active prior to asymmetric division when DNA is damaged. DisA forms globular foci that rapidly scan along the chromosomes during sporulation, searching for lesions. When a lesion is present, DisA pauses at the lesion site. This triggers a cellular response that culminates in a temporary block in sporulation initiation. In terms of biological role, also has diadenylate cyclase activity, catalyzing the condensation of 2 ATP molecules into cyclic di-AMP (c-di-AMP). c-di-AMP acts as a signaling molecule that couples DNA integrity with progression of sporulation. The rise in c-di-AMP level generated by DisA while scanning the chromosome, operates as a positive signal that advances sporulation; upon encountering a lesion, the DisA focus arrests at the damaged site and halts c-di-AMP synthesis. The sequence is that of DNA integrity scanning protein DisA from Clostridium botulinum (strain 657 / Type Ba4).